The sequence spans 504 residues: L-carnitine/gamma-butyrobetaine antiporter (504 aa).

Helical transmembrane passes span 8-28 (AGIE…LCWL), 51-71 (WGWA…WLVF), 92-112 (IFMM…SIEI), 143-163 (GPLP…FFFV), 195-215 (FYLV…TPLV), 231-251 (LDAI…AFGL), 263-283 (TYLS…SFIV), 315-335 (AWTV…SIFL), 347-367 (LCLG…TYSG), 403-423 (LSTA…VTLI), 446-466 (LLVR…LLAL), and 475-495 (AIIA…LSFI).

Belongs to the BCCT transporter (TC 2.A.15) family. CaiT subfamily. In terms of assembly, homotrimer.

Its subcellular location is the cell inner membrane. It catalyses the reaction 4-(trimethylamino)butanoate(in) + (R)-carnitine(out) = 4-(trimethylamino)butanoate(out) + (R)-carnitine(in). The protein operates within amine and polyamine metabolism; carnitine metabolism. In terms of biological role, catalyzes the exchange of L-carnitine for gamma-butyrobetaine. This is L-carnitine/gamma-butyrobetaine antiporter from Proteus sp. (strain LE138).